A 361-amino-acid polypeptide reads, in one-letter code: Mycothiol acetyltransferase (361 aa).

2 consecutive N-acetyltransferase domains span residues 25 to 173 (PRVR…LPGS) and 195 to 361 (VTVL…AWKF). A 1D-myo-inositol 2-(L-cysteinylamino)-2-deoxy-alpha-D-glucopyranoside-binding site is contributed by E59. Position 98 to 100 (98 to 100 (LAV)) interacts with acetyl-CoA. Residues E229, K280, and E295 each contribute to the 1D-myo-inositol 2-(L-cysteinylamino)-2-deoxy-alpha-D-glucopyranoside site. Acetyl-CoA contacts are provided by residues 299 to 301 (IGL) and 306 to 312 (QGRGLGR). Residue Y333 coordinates 1D-myo-inositol 2-(L-cysteinylamino)-2-deoxy-alpha-D-glucopyranoside. Position 338–343 (338–343 (NAPAVH)) interacts with acetyl-CoA.

The protein belongs to the acetyltransferase family. MshD subfamily. Monomer.

It carries out the reaction 1D-myo-inositol 2-(L-cysteinylamino)-2-deoxy-alpha-D-glucopyranoside + acetyl-CoA = mycothiol + CoA + H(+). In terms of biological role, catalyzes the transfer of acetyl from acetyl-CoA to desacetylmycothiol (Cys-GlcN-Ins) to form mycothiol. This is Mycothiol acetyltransferase from Corynebacterium kroppenstedtii (strain DSM 44385 / JCM 11950 / CIP 105744 / CCUG 35717).